Reading from the N-terminus, the 108-residue chain is Probable 4-amino-4-deoxy-L-arabinose-phosphoundecaprenol flippase subunit ArnE (108 aa).

3 consecutive transmembrane segments (helical) span residues 32-52 (PLLL…LVWL), 58-78 (VPVG…TLAA), and 85-105 (TLSL…AIMG). The region spanning 34-106 (LLWLGGSVLL…IVAGVAIMGS (73 aa)) is the EamA domain.

Belongs to the ArnE family. Heterodimer of ArnE and ArnF.

The protein localises to the cell inner membrane. The protein operates within bacterial outer membrane biogenesis; lipopolysaccharide biosynthesis. Translocates 4-amino-4-deoxy-L-arabinose-phosphoundecaprenol (alpha-L-Ara4N-phosphoundecaprenol) from the cytoplasmic to the periplasmic side of the inner membrane. The polypeptide is Probable 4-amino-4-deoxy-L-arabinose-phosphoundecaprenol flippase subunit ArnE (Erwinia tasmaniensis (strain DSM 17950 / CFBP 7177 / CIP 109463 / NCPPB 4357 / Et1/99)).